The chain runs to 227 residues: Probable septum site-determining protein MinC (227 aa).

Belongs to the MinC family. Interacts with MinD and FtsZ.

In terms of biological role, cell division inhibitor that blocks the formation of polar Z ring septums. Rapidly oscillates between the poles of the cell to destabilize FtsZ filaments that have formed before they mature into polar Z rings. Prevents FtsZ polymerization. This chain is Probable septum site-determining protein MinC, found in Geobacillus kaustophilus (strain HTA426).